Consider the following 857-residue polypeptide: Bifunctional levopimaradiene synthase, chloroplastic (857 aa).

Residues M1–S33 constitute a chloroplast transit peptide. K257 lines the substrate pocket. Mg(2+)-binding residues include D390 and D392. The short motif at D390 to D393 is the DXDD motif element. K477 lines the substrate pocket. Positions 609, 613, 753, 757, and 761 each coordinate Mg(2+). Residues D609–D613 carry the DDXXD motif motif.

The protein belongs to the terpene synthase family. Tpsd subfamily. The cofactor is Mg(2+).

Its subcellular location is the plastid. The protein resides in the chloroplast. The catalysed reaction is (2E,6E,10E)-geranylgeranyl diphosphate = (+)-copalyl diphosphate. It carries out the reaction (+)-copalyl diphosphate = abieta-7,13-diene + diphosphate. It catalyses the reaction (+)-copalyl diphosphate = abieta-8(14),12-diene + diphosphate. The enzyme catalyses (+)-copalyl diphosphate = neoabietadiene + diphosphate. It participates in terpene metabolism; oleoresin biosynthesis. Involved in defensive oleoresin formation in conifers in response to insect attack or other injury. Involved in diterpene (C20) olefins biosynthesis. Bifunctional enzyme that catalyzes two sequential cyclizations of geranylgeranyl diphosphate (GGPP) to levopimaradiene. Levopimaradiene is the major products of the enzyme with abietadiene and neoabietadiene. No activity with farnesyl diphosphate (FPP) as substrate. The sequence is that of Bifunctional levopimaradiene synthase, chloroplastic from Pinus banksiana (Jack pine).